We begin with the raw amino-acid sequence, 232 residues long: Floral homeotic protein APETALA 3 (232 aa).

The MADS-box domain maps to 3-57 (RGKIQIKRIENQTNRQVTYSKRRNGLFKKAHELTVLCDARVSIIMFSSSNKLHEY). Residues 75–164 (SDVDVWATQY…KSQQDIQKNL (90 aa)) adopt a coiled-coil conformation. A K-box domain is found at 84–174 (YERMQETKRK…IHELELRAED (91 aa)).

In terms of assembly, forms a heterodimer with PISTILLATA, capable of binding to CArG-box sequences. AP3/PI heterodimer binds AP1 or SEP3 to form complexes. As to expression, expressed in petals and stamens.

The protein localises to the nucleus. Its function is as follows. Probable transcription factor involved in the genetic control of flower development. Is required for normal development of petals and stamens in the wild-type flower. Forms a heterodimer with PISTILLATA that is required for autoregulation of both AP3 and PI genes. AP3/PI heterodimer interacts with APETALA1 or SEPALLATA3 to form a ternary complex that could be responsible for the regulation of the genes involved in the flower development. AP3/PI heterodimer activates the expression of NAP. AP3/PI prevents GATA22/GNL and GATA21/GNC expression. In Arabidopsis thaliana (Mouse-ear cress), this protein is Floral homeotic protein APETALA 3 (AP3).